The sequence spans 364 residues: 4-hydroxythreonine-4-phosphate dehydrogenase (364 aa).

Substrate contacts are provided by H138 and T139. A divalent metal cation contacts are provided by H169, H214, and H269. Residues K277, N286, and R295 each coordinate substrate.

This sequence belongs to the PdxA family. In terms of assembly, homodimer. It depends on a divalent metal cation as a cofactor.

The protein resides in the cytoplasm. The enzyme catalyses 4-(phosphooxy)-L-threonine + NAD(+) = 3-amino-2-oxopropyl phosphate + CO2 + NADH. Its pathway is cofactor biosynthesis; pyridoxine 5'-phosphate biosynthesis; pyridoxine 5'-phosphate from D-erythrose 4-phosphate: step 4/5. Functionally, catalyzes the NAD(P)-dependent oxidation of 4-(phosphooxy)-L-threonine (HTP) into 2-amino-3-oxo-4-(phosphooxy)butyric acid which spontaneously decarboxylates to form 3-amino-2-oxopropyl phosphate (AHAP). This chain is 4-hydroxythreonine-4-phosphate dehydrogenase, found in Bacteroides thetaiotaomicron (strain ATCC 29148 / DSM 2079 / JCM 5827 / CCUG 10774 / NCTC 10582 / VPI-5482 / E50).